We begin with the raw amino-acid sequence, 669 residues long: Zeaxanthin epoxidase, chloroplastic (669 aa).

A chloroplast-targeting transit peptide spans 1–49; that stretch reads MYSTVFYTSVHPSTSVLSRKQLPLLISKDFSAELYHSLPCRSLENGHIN. FAD-binding positions include 87-115 and 365-378; these read KVLV…LVFE and TFSW…LLGD. Residues 553-617 form the FHA domain; that stretch reads IVLSRDEDVP…HGTWVTDNEG (65 aa).

Requires FAD as cofactor.

Its subcellular location is the plastid. The protein resides in the chloroplast. The enzyme catalyses all-trans-zeaxanthin + 4 reduced [2Fe-2S]-[ferredoxin] + 2 O2 + 4 H(+) = all-trans-violaxanthin + 4 oxidized [2Fe-2S]-[ferredoxin] + 2 H2O. The protein operates within plant hormone biosynthesis; abscisate biosynthesis. Its function is as follows. Converts zeaxanthin into antheraxanthin and subsequently violaxanthin. Involved in the epoxidation of zeaxanthin. Plays an important role in resistance to stresses, seed development and dormancy. This chain is Zeaxanthin epoxidase, chloroplastic, found in Solanum lycopersicum (Tomato).